We begin with the raw amino-acid sequence, 339 residues long: Glyoxylate reductase (339 aa).

NADP(+) is bound by residues 157–160 (LGRI) and 239–241 (TAR). Catalysis depends on residues R241 and E270. The active-site Proton donor is the H289. 289-291 (HIA) contributes to the NADP(+) binding site.

Belongs to the D-isomer specific 2-hydroxyacid dehydrogenase family. GyaR subfamily. Homodimer.

It is found in the cytoplasm. The enzyme catalyses glycolate + NAD(+) = glyoxylate + NADH + H(+). The sequence is that of Glyoxylate reductase from Thermofilum pendens (strain DSM 2475 / Hrk 5).